The chain runs to 130 residues: Metastasis-suppressor KiSS-1 (130 aa).

The signal sequence occupies residues 1–19; sequence MISMASWQLLLLLCVATYG. The tract at residues 49-82 is disordered; that stretch reads KESRYAESKPGSAGLRARRSSPCPPVEGPAGRQR. A disulfide bridge links Cys71 with Cys85. Tyr110 carries the phosphotyrosine modification. The tract at residues 110–119 is essential for receptor binding and receptor activation; sequence YNWNSFGLRY. Position 119 is a tyrosine amide (Tyr119).

The protein belongs to the KISS1 family. Weak in all tissue types with highest levels in lung and 15- 17-day embryos. Expressed in areas of the hypothalamus implicated in the neuroendocrine regulation of gonadotropin secretion, including the anteroventral periventricular nucleus, the periventricular nucleus, and the arcuate nucleus.

The protein resides in the secreted. Its function is as follows. Metastasis suppressor protein. May regulate events downstream of cell-matrix adhesion, perhaps involving cytoskeletal reorganization. Generates a C-terminally amidated peptide, metastin which functions as the endogenous ligand of the G-protein coupled receptor GPR54. Activation of the receptor inhibits cell proliferation and cell migration, key characteristics of tumor metastasis. The receptor is also essential for normal gonadotropin-released hormone physiology and for puberty. The hypothalamic KiSS1/GPR54 system is a pivotal factor in central regulation of the gonadotropic axis at puberty and in adulthood. Intracerebroventricular administration induces an increase in serum LH and FSH levels in prepubertal male and female as well as in adult animals. The polypeptide is Metastasis-suppressor KiSS-1 (Kiss1) (Mus musculus (Mouse)).